Consider the following 626-residue polypeptide: Glutamine--fructose-6-phosphate aminotransferase [isomerizing] (626 aa).

The active-site Nucleophile; for GATase activity is the C2. In terms of domain architecture, Glutamine amidotransferase type-2 spans 2–222 (CGIVGYIGPQ…NGELARLTPT (221 aa)). 2 consecutive SIS domains span residues 293–441 (LPPS…QRQS) and 471–616 (YIEA…VDQP). The active-site For Fru-6P isomerization activity is the K621.

Homodimer.

It localises to the cytoplasm. It catalyses the reaction D-fructose 6-phosphate + L-glutamine = D-glucosamine 6-phosphate + L-glutamate. Functionally, catalyzes the first step in hexosamine metabolism, converting fructose-6P into glucosamine-6P using glutamine as a nitrogen source. In Thermosynechococcus vestitus (strain NIES-2133 / IAM M-273 / BP-1), this protein is Glutamine--fructose-6-phosphate aminotransferase [isomerizing].